The sequence spans 179 residues: Apoptosis regulator Bcl-2 homolog (179 aa).

Positions 76–95 (ELFKDLINWGRICGFIVFSA) match the BH1 motif. The BH2 signature appears at 126–141 (PWMISHGGQEEFLAFS).

The protein belongs to the Bcl-2 family. In terms of assembly, interacts with host BECN1 (via BH3 homology domain); this interaction allows the virus to inhibit BECN1, and thus autophagy. Interacts with host BID. Interacts with host BAX.

The protein resides in the host mitochondrion. It is found in the host endoplasmic reticulum. In terms of biological role, suppresses apoptosis in host cell to promote the viral replication. Has the ability to potentially bind to all the members of the proapoptotic Bcl-2 family. Inhibits autophagy by interacting with host Beclin 1 (BECN1). The polypeptide is Apoptosis regulator Bcl-2 homolog (Ornithodoros (relapsing fever ticks)).